Here is a 78-residue protein sequence, read N- to C-terminus: UPF0349 protein BPUM_2879 (78 aa).

It belongs to the UPF0349 family.

The protein is UPF0349 protein BPUM_2879 of Bacillus pumilus (strain SAFR-032).